The following is a 116-amino-acid chain: PTS system N,N'-diacetylchitobiose-specific EIIA component (116 aa).

Residues 15-113 (EELEEVVMGL…ITELIELHEK (99 aa)) form the PTS EIIA type-3 domain. His89 serves as the catalytic Tele-phosphohistidine intermediate. Phosphohistidine; by HPr is present on His89.

Forms a complex with ChbB (EIIB). ChbA is a homotrimer. The cofactor is Mg(2+).

Its subcellular location is the cytoplasm. Functionally, the phosphoenolpyruvate-dependent sugar phosphotransferase system (sugar PTS), a major carbohydrate active transport system, catalyzes the phosphorylation of incoming sugar substrates concomitantly with their translocation across the cell membrane. The enzyme II ChbABC PTS system is involved in the transport of the chitin disaccharide N,N'-diacetylchitobiose (GlcNAc2). This Escherichia coli O157:H7 protein is PTS system N,N'-diacetylchitobiose-specific EIIA component (chbA).